The primary structure comprises 460 residues: Cysteine--tRNA ligase (460 aa).

C28 lines the Zn(2+) pocket. The short motif at 30–40 is the 'HIGH' region element; it reads MTVYDYCHLGH. Residues C209, H234, and E238 each coordinate Zn(2+). A 'KMSKS' region motif is present at residues 266-270; it reads KMSKS. K269 contacts ATP.

Belongs to the class-I aminoacyl-tRNA synthetase family. Monomer. Zn(2+) serves as cofactor.

The protein localises to the cytoplasm. It catalyses the reaction tRNA(Cys) + L-cysteine + ATP = L-cysteinyl-tRNA(Cys) + AMP + diphosphate. The protein is Cysteine--tRNA ligase of Pseudomonas fluorescens (strain ATCC BAA-477 / NRRL B-23932 / Pf-5).